The following is a 564-amino-acid chain: Ribulokinase (564 aa).

This sequence belongs to the ribulokinase family.

It catalyses the reaction D-ribulose + ATP = D-ribulose 5-phosphate + ADP + H(+). It carries out the reaction L-ribulose + ATP = L-ribulose 5-phosphate + ADP + H(+). It functions in the pathway carbohydrate degradation; L-arabinose degradation via L-ribulose; D-xylulose 5-phosphate from L-arabinose (bacterial route): step 2/3. This chain is Ribulokinase, found in Anoxybacillus flavithermus (strain DSM 21510 / WK1).